A 106-amino-acid chain; its full sequence is Phosphoribosyl-ATP pyrophosphatase 1 (106 aa).

It belongs to the PRA-PH family.

The protein resides in the cytoplasm. It carries out the reaction 1-(5-phospho-beta-D-ribosyl)-ATP + H2O = 1-(5-phospho-beta-D-ribosyl)-5'-AMP + diphosphate + H(+). It functions in the pathway amino-acid biosynthesis; L-histidine biosynthesis; L-histidine from 5-phospho-alpha-D-ribose 1-diphosphate: step 2/9. This is Phosphoribosyl-ATP pyrophosphatase 1 (hisE1) from Bradyrhizobium diazoefficiens (strain JCM 10833 / BCRC 13528 / IAM 13628 / NBRC 14792 / USDA 110).